Here is a 128-residue protein sequence, read N- to C-terminus: Saitohin (128 aa).

Polar residues predominate over residues 77–87; sequence SYSSEENSRNG. The interval 77 to 128 is disordered; sequence SYSSEENSRNGAEQGRQLSIEGPFQGQNCPSHPAAALPLPMRGESQATSCQV.

As to quaternary structure, interacts with PRDX6.

The protein localises to the cytoplasm. It is found in the nucleus. This chain is Saitohin (STH), found in Pan troglodytes (Chimpanzee).